The following is a 349-amino-acid chain: MIEFDNLTYLHGKPQGTGLLKANPEDFVVVEDLGFEPDGEGEHILVRILKNGCNTRFVADALAKFLKIHAREVSFAGQKDKHAVTEQWLCARVPGKEMPDLSAFQLEGCQVLEYARHKRKLRLGALKGNAFTLVLREVSNRDDVEQRLIDICVKGVPNYFGAQRFGIGGSNLQGALRWAQTNTPVRDRNKRSFWLSAARSALFNQIVAERLKKADVNQVVDGDALQLAGRGSWFVATTEELAELQRRVNDKELMITAALPGSGEWGTQREALAFEQAAVAEETELQTLLVREKVEAARRAMLLYPQQLSWNWWDDVTVEIRFWLPAGSFATSVVRELINTTGDYAHIAE.

Substrate is bound at residue Phe-27. Asp-80 (nucleophile) is an active-site residue. Asn-129 contacts substrate. In terms of domain architecture, TRUD spans 155-303; that stretch reads GVPNYFGAQR…VEAARRAMLL (149 aa). Residue Phe-329 coordinates substrate.

It belongs to the pseudouridine synthase TruD family.

The catalysed reaction is uridine(13) in tRNA = pseudouridine(13) in tRNA. In terms of biological role, responsible for synthesis of pseudouridine from uracil-13 in transfer RNAs. The chain is tRNA pseudouridine synthase D from Escherichia coli O6:H1 (strain CFT073 / ATCC 700928 / UPEC).